The chain runs to 738 residues: 1,4-alpha-glucan branching enzyme GlgB (738 aa).

The active-site Nucleophile is D399. The active-site Proton donor is the E452.

This sequence belongs to the glycosyl hydrolase 13 family. GlgB subfamily. As to quaternary structure, monomer.

The catalysed reaction is Transfers a segment of a (1-&gt;4)-alpha-D-glucan chain to a primary hydroxy group in a similar glucan chain.. It functions in the pathway glycan biosynthesis; glycogen biosynthesis. Its function is as follows. Catalyzes the formation of the alpha-1,6-glucosidic linkages in glycogen by scission of a 1,4-alpha-linked oligosaccharide from growing alpha-1,4-glucan chains and the subsequent attachment of the oligosaccharide to the alpha-1,6 position. The polypeptide is 1,4-alpha-glucan branching enzyme GlgB (Chlamydia trachomatis serovar D (strain ATCC VR-885 / DSM 19411 / UW-3/Cx)).